The chain runs to 105 residues: Insulin-like peptide 7 (105 aa).

The signal sequence occupies residues 1–18 (MPPIILVFFLVLIPASQQ). A propeptide spanning residues 19–57 (YPFSLESLNDQIINEEVIEYMLENSIRSSRTRRVPDEKK) is cleaved from the precursor. Cystine bridges form between C61–C90, C73–C103, C77–C104, and C89–C94.

This sequence belongs to the insulin family.

Its subcellular location is the secreted. Insulin-like peptide which plays a role in ageing as a consequence of daf-16 activity. The chain is Insulin-like peptide 7 from Caenorhabditis elegans.